A 429-amino-acid chain; its full sequence is MKTVAIVGSQWGDEGKGKVIDYLATQADVVVRGQGGNNAGHTLVVEGKKYALHLIPSGVLNPNTVNIIGNGIVFDPKGFLEELEMFKTDNISTENIKISDRAHVIFPYHKELDALSEEARGDLKIGTTKKGIGPCYMDKTERSGIRICDLMDKDKFAIKLKAQIDAKNEIVKNIYGKEELFDFETIYNEYLGYAEQIRKYVADTSVIVYDAVRAGKKVLFEGAQGTLLDLDLGTYPFVTSSHPTSGGFAIGAGIGPNMIKDVVGIVKAYTTRVGEGPFVTEQINETGDKIREQGHEFGVTTGRPRRCGWFDAVIVKYAARVNGLTSISFMLLDVLTGFDKIKVCTSYKMGDKIITDFPASLDDLAKCEPVYEELDGWNEDITQIDNFDDLPENAKKYVAKIEELVGVSVDMVSVGPNRAQTIIRRNIFA.

GTP contacts are provided by residues 12–18 (GDEGKGK) and 40–42 (GHT). D13 functions as the Proton acceptor in the catalytic mechanism. Residues D13 and G40 each coordinate Mg(2+). IMP-binding positions include 13-16 (DEGK), 38-41 (NAGH), T128, R142, Q224, T239, and R303. The active-site Proton donor is H41. Position 299 to 305 (299 to 305 (VTTGRPR)) interacts with substrate. GTP contacts are provided by residues R305, 331 to 333 (LLD), and 413 to 415 (SVG).

It belongs to the adenylosuccinate synthetase family. As to quaternary structure, homodimer. Mg(2+) serves as cofactor.

It is found in the cytoplasm. The enzyme catalyses IMP + L-aspartate + GTP = N(6)-(1,2-dicarboxyethyl)-AMP + GDP + phosphate + 2 H(+). It functions in the pathway purine metabolism; AMP biosynthesis via de novo pathway; AMP from IMP: step 1/2. In terms of biological role, plays an important role in the de novo pathway of purine nucleotide biosynthesis. Catalyzes the first committed step in the biosynthesis of AMP from IMP. This is Adenylosuccinate synthetase from Clostridioides difficile (strain 630) (Peptoclostridium difficile).